The following is a 616-amino-acid chain: Dihydroxy-acid dehydratase (616 aa).

Aspartate 81 lines the Mg(2+) pocket. Cysteine 122 contacts [2Fe-2S] cluster. Aspartate 123 and lysine 124 together coordinate Mg(2+). The residue at position 124 (lysine 124) is an N6-carboxylysine. Position 195 (cysteine 195) interacts with [2Fe-2S] cluster. Glutamate 491 serves as a coordination point for Mg(2+). Catalysis depends on serine 517, which acts as the Proton acceptor.

The protein belongs to the IlvD/Edd family. Homodimer. [2Fe-2S] cluster serves as cofactor. Requires Mg(2+) as cofactor.

It catalyses the reaction (2R)-2,3-dihydroxy-3-methylbutanoate = 3-methyl-2-oxobutanoate + H2O. The enzyme catalyses (2R,3R)-2,3-dihydroxy-3-methylpentanoate = (S)-3-methyl-2-oxopentanoate + H2O. The protein operates within amino-acid biosynthesis; L-isoleucine biosynthesis; L-isoleucine from 2-oxobutanoate: step 3/4. It participates in amino-acid biosynthesis; L-valine biosynthesis; L-valine from pyruvate: step 3/4. In terms of biological role, functions in the biosynthesis of branched-chain amino acids. Catalyzes the dehydration of (2R,3R)-2,3-dihydroxy-3-methylpentanoate (2,3-dihydroxy-3-methylvalerate) into 2-oxo-3-methylpentanoate (2-oxo-3-methylvalerate) and of (2R)-2,3-dihydroxy-3-methylbutanoate (2,3-dihydroxyisovalerate) into 2-oxo-3-methylbutanoate (2-oxoisovalerate), the penultimate precursor to L-isoleucine and L-valine, respectively. This Salmonella paratyphi A (strain ATCC 9150 / SARB42) protein is Dihydroxy-acid dehydratase.